The primary structure comprises 678 residues: Probable antibacterial peptide polyprotein (678 aa).

Tandem repeats lie at residues 1-67, 68-114, 115-161, 162-208, 209-255, 256-302, 303-349, 350-396, 397-443, 444-490, 491-537, 538-584, 585-631, and 632-678. The segment at 1–678 is 14 X approximate tandem repeats; sequence MRSPRVIHLA…SEGVVLPEVR (678 aa). Thr-32 carries an O-linked (GalNAc...) threonine glycan. Disordered stretches follow at residues 58–97 and 113–678; these read SEAE…DASL and VRER…PEVR. Residues 64–73 show a composition bias toward basic and acidic residues; it reads PEVRERRSPV. O-linked (GalNAc...) threonine glycosylation is found at Thr-83 and Thr-130. Over residues 145–157 the composition is skewed to low complexity; that stretch reads ESELSPLSEAEVL. Basic and acidic residues predominate over residues 158 to 167; that stretch reads PEVRERRSPV. Residue Thr-177 is glycosylated (O-linked (GalNAc...) threonine). Residues 188 to 204 show a composition bias toward low complexity; the sequence is VASLESELSPLSEAEVL. The segment covering 205-214 has biased composition (basic and acidic residues); the sequence is PEVRERRSPV. O-linked (GalNAc...) threonine glycans are attached at residues Thr-224 and Thr-271. The span at 299–308 shows a compositional bias: basic and acidic residues; the sequence is PEVRERRSPV. Thr-318 carries an O-linked (GalNAc...) threonine glycan. Over residues 333 to 345 the composition is skewed to low complexity; it reads ESELSPLSEAEVL. Positions 346 to 355 are enriched in basic and acidic residues; sequence PEVRERRSPV. The O-linked (GalNAc...) threonine glycan is linked to Thr-365. Low complexity predominate over residues 380–392; it reads ESELSPLSEAEVL. Basic and acidic residues predominate over residues 393–402; the sequence is PEVRERRSPV. An O-linked (GalNAc...) threonine glycan is attached at Thr-412. Over residues 427–439 the composition is skewed to low complexity; sequence ESELSPLSEAEVL. Over residues 440–449 the composition is skewed to basic and acidic residues; that stretch reads PEVRERRSPV. The O-linked (GalNAc...) threonine glycan is linked to Thr-459. Residues 474–486 are compositionally biased toward low complexity; sequence ESELSPLSEAEVL. Basic and acidic residues predominate over residues 487-496; that stretch reads PEVRERRSPV. Residue Thr-506 is glycosylated (O-linked (GalNAc...) threonine). The segment covering 521–533 has biased composition (low complexity); the sequence is ESELSPSSEAEVL. The span at 534-543 shows a compositional bias: basic and acidic residues; it reads PEVRERRSPV. Thr-553 carries O-linked (GalNAc...) threonine glycosylation. A compositionally biased stretch (low complexity) spans 568–580; it reads ESELSPLSEAEVL. Residues 581-590 show a composition bias toward basic and acidic residues; the sequence is PEVRERRSPV. A glycan (O-linked (GalNAc...) threonine) is linked at Thr-600. Positions 615–627 are enriched in low complexity; sequence ESELSPLSEAEGL. Thr-647 carries an O-linked (GalNAc...) threonine glycan.

It is found in the secreted. Has antibacterial activity in vitro. In Riptortus clavatus (Bean bug), this protein is Probable antibacterial peptide polyprotein.